A 238-amino-acid polypeptide reads, in one-letter code: Aspirochlorine biosynthesis protein N (238 aa).

This sequence belongs to the asaB hydroxylase/desaturase family.

The protein operates within mycotoxin biosynthesis. In terms of biological role, part of the gene cluster that mediates the biosynthesis of aspirochlorine (or antibiotic A30641), an unusual halogenated spiro compound with distinctive antifungal properties due to selective inhibition of protein biosynthesis, and which is also active against bacteria, viruses, and murine tumor cells. The non-ribosomal peptide synthetase (NRPS) aclP is responsible the formation of the diketopiperazine (DKP) core from the condensation of 2 phenylalanine residues. One Phe residue is tailored into chlorotyrosine by hydroxylation and chlorination, whereas the second Phe undergoes an unprecedented C-C bond cleavage to be converted into glycine. After formation of the DKP, sulfur is incorporated into the DKP by conjugation with glutathione by aclG, followed by its stepwise degradation to the thiol by aclI, aclJ and aclK, and the dithiol oxidation by aclT. In addition, oxygenases (aclB, aclC, aclL and aclO) and O-methyltransferases (aclM and aclU) act as tailoring enzymes to produce the intermediate dechloroaspirochlorine. Ultimately, chlorination of dechloroaspirochlorine by the halogenase aclH is the last step in the aspirochlorine pathway. This is Aspirochlorine biosynthesis protein N from Aspergillus oryzae (strain ATCC 42149 / RIB 40) (Yellow koji mold).